Reading from the N-terminus, the 346-residue chain is NADH-cytochrome b5 reductase 2 (346 aa).

The helical transmembrane segment at 28–50 threads the bilayer; that stretch reads GGSNAALYAGLAAAAGAGAYYFL. Residues 95-200 enclose the FAD-binding FR-type domain; sequence QGFISLKLDS…KGPIPKYPWS (106 aa). Position 203–238 (203–238) interacts with FAD; that stretch reads KHDHIALIAGGTGITPMYQLARAIFNNPADKTKVTL.

This sequence belongs to the flavoprotein pyridine nucleotide cytochrome reductase family. FAD serves as cofactor.

It is found in the mitochondrion outer membrane. The catalysed reaction is 2 Fe(III)-[cytochrome b5] + NADH = 2 Fe(II)-[cytochrome b5] + NAD(+) + H(+). In terms of biological role, may mediate the reduction of outer membrane cytochrome b5. The polypeptide is NADH-cytochrome b5 reductase 2 (mcr1) (Botryotinia fuckeliana (strain B05.10) (Noble rot fungus)).